Here is a 292-residue protein sequence, read N- to C-terminus: 33 kDa chaperonin (292 aa).

2 cysteine pairs are disulfide-bonded: Cys-230/Cys-232 and Cys-263/Cys-266.

The protein belongs to the HSP33 family. In terms of processing, under oxidizing conditions two disulfide bonds are formed involving the reactive cysteines. Under reducing conditions zinc is bound to the reactive cysteines and the protein is inactive.

Its subcellular location is the cytoplasm. Functionally, redox regulated molecular chaperone. Protects both thermally unfolding and oxidatively damaged proteins from irreversible aggregation. Plays an important role in the bacterial defense system toward oxidative stress. The sequence is that of 33 kDa chaperonin from Shigella dysenteriae serotype 1 (strain Sd197).